Reading from the N-terminus, the 686-residue chain is MTDALLPAAPQPLEKENDGYFRKGCNPLAQTGRSKLQNQRAALNQQILKAVRMRTGAENLLKVATNSKVREQVRLELSFVNSDLQMLKEELEGLNISVGVYQNTEEAFTIPLIPLGLKETKDVDFAVVLKDFILEHYSEDGYLYEDEIADLMDLRQACRTPSRDEAGVELLMTYFIQLGFVESRFFPPTRQMGLLFTWYDSLTGVPVSQQNLLLEKASVLFNTGALYTQIGTRCDRQTQAGLESAIDAFQRAAGVLNYLKDTFTHTPSYDMSPAMLSVLVKMMLAQAQESVFEKISLPGIRNEFFMLVKVAQEAAKVGEVYQQLHAAMSQAPVKENIPYSWASLACVKAHHYAALAHYFTAILLIDHQVKPGTDLDHQEKCLSQLYDHMPEGLTPLATLKNDQQRRQLGKSHLRRAMAHHEESVREASLCKKLRSIEVLQKVLCAAQERSRLTYAQHQEEDDLLNLIDAPSVVAKTEQEVDIILPQFSKLTVTDFFQKLGPLSVFSANKRWTPPRSIRFTAEEGDLGFTLRGNAPVQVHFLDPYCSASVAGAREGDYIVSIQLVDCKWLTLSEVMKLLKSFGEDEIEMKVVSLLDSTSSMHNKSATYSVGMQKTYSMICLAIDDDDKTDKTKKISKKLSFLSWGTNKNRQKSASTLCLPSVGAARPQVKKKLPSPFSLLNSDSSWY.

An REM-1 domain is found at 26–100 (NPLAQTGRSK…LEGLNISVGV (75 aa)). Residues 46–66 (QILKAVRMRTGAENLLKVATN) are interaction with Rho. The region spanning 111 to 460 (PLIPLGLKET…RLTYAQHQEE (350 aa)) is the BRO1 domain. Residues 515-593 (RSIRFTAEEG…DEIEMKVVSL (79 aa)) enclose the PDZ domain. Thr655 is modified (phosphothreonine).

Belongs to the RHPN family. Interacts with GTP-bound RhoA and RhoB. Interacts with both GTP- and GDP-bound RhoA. According to PubMed:12473120, it does not interact with RhoA. Interacts with KRT18. In terms of tissue distribution, widely expressed. Highly expressed in prostate, trachea, stomach, colon, thyroid and pancreas. Expressed at lower level in brain, spinal cord, kidney, placenta and liver.

Its subcellular location is the cytoplasm. It localises to the perinuclear region. In terms of biological role, binds specifically to GTP-Rho. May function in a Rho pathway to limit stress fiber formation and/or increase the turnover of F-actin structures in the absence of high levels of RhoA activity. The sequence is that of Rhophilin-2 (RHPN2) from Homo sapiens (Human).